A 203-amino-acid chain; its full sequence is Dual-action ribosomal maturation protein DarP (203 aa).

2 disordered regions span residues 1-31 and 182-203; these read MPPM…SKSQ and GGAS…DDEA. Acidic residues predominate over residues 186–203; it reads DSDDEAADDAGDDHDDEA.

It belongs to the DarP family.

The protein resides in the cytoplasm. Functionally, member of a network of 50S ribosomal subunit biogenesis factors which assembles along the 30S-50S interface, preventing incorrect 23S rRNA structures from forming. Promotes peptidyl transferase center (PTC) maturation. This Burkholderia cenocepacia (strain HI2424) protein is Dual-action ribosomal maturation protein DarP.